The primary structure comprises 38 residues: DSHEERHHGRHGHHKYGRKFHEKHHSHRGYRSNYLYDN.

Positions 1 to 38 (DSHEERHHGRHGHHKYGRKFHEKHHSHRGYRSNYLYDN) are disordered. Ser2 carries the phosphoserine modification. A compositionally biased stretch (basic residues) spans 8–30 (HGRHGHHKYGRKFHEKHHSHRGY).

Belongs to the histatin/statherin family.

The protein resides in the secreted. Functionally, histatins (Hsts) are cationic and histidine-rich secreted peptides mainly synthesized by saliva glands of humans and higher primates. Hsts are considered to be major precursors of the protective proteinaceous structure on tooth surfaces (enamel pellicle). In Macaca fascicularis (Crab-eating macaque), this protein is Histatin-1 (HTN1).